Reading from the N-terminus, the 97-residue chain is Exodeoxyribonuclease 7 small subunit (97 aa).

Residues 1 to 21 (MAKTATPGACASDPGSGPLPE) are disordered.

The protein belongs to the XseB family. As to quaternary structure, heterooligomer composed of large and small subunits.

The protein resides in the cytoplasm. The enzyme catalyses Exonucleolytic cleavage in either 5'- to 3'- or 3'- to 5'-direction to yield nucleoside 5'-phosphates.. Functionally, bidirectionally degrades single-stranded DNA into large acid-insoluble oligonucleotides, which are then degraded further into small acid-soluble oligonucleotides. This is Exodeoxyribonuclease 7 small subunit from Burkholderia mallei (strain NCTC 10247).